The chain runs to 463 residues: Cysteine--tRNA ligase (463 aa).

A Zn(2+)-binding site is contributed by Cys-28. Residues 30–40 carry the 'HIGH' region motif; the sequence is ITPYDLCHIGH. Zn(2+)-binding residues include Cys-211, His-236, and Glu-240. Positions 268 to 272 match the 'KMSKS' region motif; sequence KMSKS. Residue Lys-271 participates in ATP binding.

The protein belongs to the class-I aminoacyl-tRNA synthetase family. Monomer. The cofactor is Zn(2+).

It is found in the cytoplasm. The catalysed reaction is tRNA(Cys) + L-cysteine + ATP = L-cysteinyl-tRNA(Cys) + AMP + diphosphate. The chain is Cysteine--tRNA ligase from Wigglesworthia glossinidia brevipalpis.